The following is a 301-amino-acid chain: MKIGILSQFPQLYSTQRLVEACQSRGHEAVVINTLNCYMNINSIKPSIHYEGTELVGFDAIIPRIHASVTFYGCAVVRQFEMMGVYAANDSISIARSRDKLRALQLLSRKGIGMPVTGFANKPNDIPDLINMVGGAPLVIKLLEGTQGIGVVLAETKTAAESVIEAFLGLKANILVQEYIKESNGSDIRCFVVGDKVIASMKRQGPEGDFRSNLHLGGCGEVVKITAVERKMAIAAVKAMGLVVAGVDILRSNRGPLILEVNSAPGIEGIEQTTGISVTEPIVEYIEKMVAARKTNRPIIA.

The region spanning 104-287 (LQLLSRKGIG…VTEPIVEYIE (184 aa)) is the ATP-grasp domain. Residues K141, 178-179 (EY), D187, and 211-213 (RSN) each bind ATP. 3 residues coordinate Mg(2+): D248, E260, and N262. Positions 248, 260, and 262 each coordinate Mn(2+).

The protein belongs to the RimK family. Mg(2+) is required as a cofactor. Mn(2+) serves as cofactor.

The protein is Probable alpha-L-glutamate ligase 1 of Shewanella baltica (strain OS155 / ATCC BAA-1091).